The following is a 262-amino-acid chain: uncharacterized protein (262 aa).

Residues 13-35 form a helical membrane-spanning segment; it reads VVGALLTVVVIVTAAGIIYVISH.

The protein resides in the membrane. This is an uncharacterized protein from Archaeoglobus fulgidus (strain ATCC 49558 / DSM 4304 / JCM 9628 / NBRC 100126 / VC-16).